A 187-amino-acid chain; its full sequence is Homeobox expressed in ES cells 1-B (187 aa).

Positions 110–169 form a DNA-binding region, homeobox; it reads GRRPRTAFTRSQIEILENVFRVNSYPGIDVREELASKLALDEDRIQIWFQNRRAKLKRSH.

This sequence belongs to the ANF homeobox family. As to quaternary structure, the N-terminus interacts with the LIM 2 domain of zyx. In terms of tissue distribution, first expressed at a low level in the late blastula stage (stage 9) in most cells of the animal half of the embryo. Following this, predominantly expressed in two zones; the dorsal blastopore lip (Spemann organizer) at the beginning of gastrulation, and subsequently in the anterior part of the neural anlage (the region of future forebrain).

The protein localises to the nucleus. Regulates the earliest stages of development of the anterior neural plate. Plays a role in forebrain development by inhibiting the expression of otx2 and pax6 in the rostral region of the anterior neural plate. Necessary for both neural differentiation and neural patterning. Controls Spemann organizer development. May act as a transcriptional repressor. This chain is Homeobox expressed in ES cells 1-B (hesx1-b), found in Xenopus laevis (African clawed frog).